A 253-amino-acid polypeptide reads, in one-letter code: Triosephosphate isomerase (253 aa).

Substrate is bound at residue 15–17; the sequence is NWK. The active-site Electrophile is the histidine 101. Catalysis depends on glutamate 171, which acts as the Proton acceptor. Substrate-binding positions include glycine 177, serine 216, and 237-238; that span reads GG.

Belongs to the triosephosphate isomerase family. As to quaternary structure, homodimer.

The protein resides in the cytoplasm. It catalyses the reaction D-glyceraldehyde 3-phosphate = dihydroxyacetone phosphate. Its pathway is carbohydrate biosynthesis; gluconeogenesis. It functions in the pathway carbohydrate degradation; glycolysis; D-glyceraldehyde 3-phosphate from glycerone phosphate: step 1/1. Functionally, involved in the gluconeogenesis. Catalyzes stereospecifically the conversion of dihydroxyacetone phosphate (DHAP) to D-glyceraldehyde-3-phosphate (G3P). This Caulobacter vibrioides (strain ATCC 19089 / CIP 103742 / CB 15) (Caulobacter crescentus) protein is Triosephosphate isomerase.